The primary structure comprises 213 residues: MSNYAPADPRASSNRYRYNGTCMTNPSERFDNLVGSDQSFEQLRRATFGEQPEEGIVLTTLDNAVNWIRKNSIWPMTFGLACCAIEMMSMGASRFDIARFGAEVFRPSPRQSDLMIIAGRVSQKMAPVIRHLYLQMPEPKWVISMGACATSGGVFNNYALVQGVNQYIPVDIYVPGCPPRPEQLIYAITLLQEKIQAERGSFRRALNLEPVTP.

The [4Fe-4S] cluster site is built by Cys82, Cys83, Cys148, and Cys177.

This sequence belongs to the complex I 20 kDa subunit family. As to quaternary structure, NDH-1 is composed of 14 different subunits. Subunits NuoB, C, D, E, F, and G constitute the peripheral sector of the complex. Requires [4Fe-4S] cluster as cofactor.

It localises to the cell inner membrane. It catalyses the reaction a quinone + NADH + 5 H(+)(in) = a quinol + NAD(+) + 4 H(+)(out). Its function is as follows. NDH-1 shuttles electrons from NADH, via FMN and iron-sulfur (Fe-S) centers, to quinones in the respiratory chain. The immediate electron acceptor for the enzyme in this species is believed to be ubiquinone. Couples the redox reaction to proton translocation (for every two electrons transferred, four hydrogen ions are translocated across the cytoplasmic membrane), and thus conserves the redox energy in a proton gradient. The polypeptide is NADH-quinone oxidoreductase subunit B 1 (Koribacter versatilis (strain Ellin345)).